The chain runs to 245 residues: tRNA pseudouridine synthase A (245 aa).

D52 (nucleophile) is an active-site residue. Y110 is a binding site for substrate.

The protein belongs to the tRNA pseudouridine synthase TruA family. As to quaternary structure, homodimer.

The catalysed reaction is uridine(38/39/40) in tRNA = pseudouridine(38/39/40) in tRNA. In terms of biological role, formation of pseudouridine at positions 38, 39 and 40 in the anticodon stem and loop of transfer RNAs. The chain is tRNA pseudouridine synthase A from Pseudothermotoga lettingae (strain ATCC BAA-301 / DSM 14385 / NBRC 107922 / TMO) (Thermotoga lettingae).